We begin with the raw amino-acid sequence, 296 residues long: Tubulin polyglutamylase complex subunit 2 (296 aa).

The disordered stretch occupies residues 257–296 (KILIPKKKGPVQPVSGQKGPGPLAPPTSKPSAGCGNPVRK).

Part of the neuronal tubulin polyglutamylase complex which contains TPGS1, TPGS2, TTLL1, LRRC49 and NICN1. Interacts with CSTPP1 and LRRC49.

It localises to the cytoplasm. The protein resides in the cytoskeleton. It is found in the microtubule organizing center. Its subcellular location is the centrosome. The protein localises to the centriolar satellite. Its function is as follows. Subunit of the tubulin polyglutamylase complex (TPGC). The complex mediates cilia and flagella polyglutamylation which is essential for their biogenesis and motility. In Rattus norvegicus (Rat), this protein is Tubulin polyglutamylase complex subunit 2 (Tpgs2).